We begin with the raw amino-acid sequence, 234 residues long: MINDRETIDLERLSLPHGAPAVVWQISDSPVAYPEAVAAMEVRAAAIAAGEAPELVWLLEHPPLYTSGTSAKPADLLDPRFPMYPTGRGGQITYHGPGQRVAYVMLDLKRRRPDVRAYVAGLEQWIIATLEHFNVKGERREDRVGVWVKRPDKGPGHEDKIAAIGVRLKRWVSFHGIAINVEPDLTHFSAIVPCGVSDPRYGVTSLVDLGLPVTMQDVDVALRAAFEQVFGPTR.

Residues 50-234 (GEAPELVWLL…AFEQVFGPTR (185 aa)) enclose the BPL/LPL catalytic domain. Residues 88–95 (RGGQITYH), 163–165 (AIG), and 176–178 (GIA) each bind substrate. The active-site Acyl-thioester intermediate is Cys-194.

It belongs to the LipB family.

It is found in the cytoplasm. It catalyses the reaction octanoyl-[ACP] + L-lysyl-[protein] = N(6)-octanoyl-L-lysyl-[protein] + holo-[ACP] + H(+). It functions in the pathway protein modification; protein lipoylation via endogenous pathway; protein N(6)-(lipoyl)lysine from octanoyl-[acyl-carrier-protein]: step 1/2. Catalyzes the transfer of endogenously produced octanoic acid from octanoyl-acyl-carrier-protein onto the lipoyl domains of lipoate-dependent enzymes. Lipoyl-ACP can also act as a substrate although octanoyl-ACP is likely to be the physiological substrate. The polypeptide is Octanoyltransferase (Rhodopseudomonas palustris (strain BisA53)).